Here is a 259-residue protein sequence, read N- to C-terminus: UPF0246 protein Pfl01_0961 (259 aa).

The protein belongs to the UPF0246 family.

In Pseudomonas fluorescens (strain Pf0-1), this protein is UPF0246 protein Pfl01_0961.